The primary structure comprises 1188 residues: DNA-directed RNA polymerase subunit beta (1188 aa).

It belongs to the RNA polymerase beta chain family. In terms of assembly, the RNAP catalytic core consists of 2 alpha, 1 beta, 1 beta' and 1 omega subunit. When a sigma factor is associated with the core the holoenzyme is formed, which can initiate transcription.

The catalysed reaction is RNA(n) + a ribonucleoside 5'-triphosphate = RNA(n+1) + diphosphate. DNA-dependent RNA polymerase catalyzes the transcription of DNA into RNA using the four ribonucleoside triphosphates as substrates. The chain is DNA-directed RNA polymerase subunit beta from Streptococcus pyogenes serotype M1.